We begin with the raw amino-acid sequence, 373 residues long: Histone-lysine N-methyltransferase SETD7 (373 aa).

Residues 1 to 20 (MDSDDDNMEEVVEGPLDEDD) form a disordered region. MORN repeat units follow at residues 36–58 (FEGHFVHGEKNGKGKFFFFDGST), 59–81 (LEGFYVDDALQGQGVYTYEDGGA), and 106–128 (FRGRYKDNIRYGMCWVYYPDGAC). The SET domain occupies 214–336 (QRVYVGQSLI…KDEELTVAYG (123 aa)). S-adenosyl-L-methionine contacts are provided by residues 226 to 228 (AGE), asparagine 296, and histidine 297.

This sequence belongs to the class V-like SAM-binding methyltransferase superfamily. Histone-lysine methyltransferase family. SET7 subfamily.

It localises to the nucleus. Its subcellular location is the chromosome. The enzyme catalyses L-lysyl(4)-[histone H3] + S-adenosyl-L-methionine = N(6)-methyl-L-lysyl(4)-[histone H3] + S-adenosyl-L-homocysteine + H(+). It catalyses the reaction L-lysyl-[protein] + S-adenosyl-L-methionine = N(6)-methyl-L-lysyl-[protein] + S-adenosyl-L-homocysteine + H(+). Its function is as follows. Histone methyltransferase that specifically monomethylates 'Lys-4' of histone H3. H3 'Lys-4' methylation represents a specific tag for epigenetic transcriptional activation. Plays a central role in the transcriptional activation of genes. Also has methyltransferase activity toward non-histone proteins. This is Histone-lysine N-methyltransferase SETD7 (setd7) from Danio rerio (Zebrafish).